A 265-amino-acid polypeptide reads, in one-letter code: Osteoclast-associated immunoglobulin-like receptor (265 aa).

Residues 1-18 (MVLSLILQLSTLWPACRA) form the signal peptide. Over 19 to 231 (DFTPTAPLAS…LDYTQGNLIR (213 aa)) the chain is Extracellular. Ig-like domains follow at residues 22–115 (PTAP…SQPS) and 125–218 (QLPR…SFEG). Residue N47 is glycosylated (N-linked (GlcNAc...) asparagine). C52 and C99 are oxidised to a cystine. N144 carries N-linked (GlcNAc...) asparagine glycosylation. Residues 232 to 248 (LGLAGMVLICLGIIVTC) form a helical membrane-spanning segment. Topologically, residues 249-265 (DWHSRSSAFDGLLPQQN) are cytoplasmic.

This sequence belongs to the leukocyte receptor complex/polymeric immunoglobulin receptor (PIR/LRC) family. In terms of tissue distribution, specifically expressed in preosteoclasts or mature osteoclasts.

It is found in the cell membrane. Its function is as follows. Regulator of osteoclastogenesis which plays an important bone-specific function in osteoclast differentiation. In Mus musculus (Mouse), this protein is Osteoclast-associated immunoglobulin-like receptor (Oscar).